A 786-amino-acid polypeptide reads, in one-letter code: MANILKKWVESDARELKRLGKKADKIEALKEEMEQLNDEKLKAKTTEFKERLQNGETLDDILVEAFAVAREAAKRVLGLFPFRVQLIGGMVLHGGNIAEMKTGEGKTLTATLPVYLNALGGKGVHVVTVNEYLAERDSSEMGELYKWLGLTVGVNSSEMTPDQKREAYNCDITYSTNSEIGFDYLRDNMVVYKEDMVQRPLNFALIDEVDSILIDEARTPLIISGQTEPTVTLYERADRYVKTLADGDYTIDWESKSISLTENGIRRAENFFKTDNLYDVENSALNHHIDQALRANYIMTKDKDYVVSDGEVLIVDSFTGRVMEGRRFSDGLHQAIEAKEHVEIQDGAKTMANITYQNLFRMYRKLSGMTGTARTEAEEFREIYNMEVTTIPTNRPVARDDRPDLLYPTLESKFKAVVKEIRDLHIKGQPVLVGTVAVETSEYLSRLLDREGIPHVVLNAKNHAREAEIVTNAGQKGAVTIATNMAGRGTDIKLGPGVVELGGLAVIGTERHESRRIDNQLRGRSGRQGDVGMSQFYLSLEDDLMIRFGSERIKDLLSRMKIADEDAVIRSGLISRQVESAQKRVEGNNYDARKNVLQYDDVMRAQREVIYAERQQVIMEETSLKDVLMPMVDRTIDRVVDAHTQKTQKNFDLETIVEFARTALVSDKDIHQADVEGMSAKEIKDYLKQLADQMYIEKEKALYDPAQILEFEKVVILRVVDQHWTDHIDAMDQLRQSVGLRGYGQLNPLVEYQQEGYRMFNEMITDIEYETTRLFMKSEIRQNLQR.

Residues Q85, 103 to 107, and D491 contribute to the ATP site; that span reads GEGKT.

This sequence belongs to the SecA family. As to quaternary structure, monomer and homodimer. Part of the essential Sec protein translocation apparatus which comprises SecA, SecYEG and auxiliary proteins SecDF. Other proteins may also be involved.

The protein resides in the cell membrane. Its subcellular location is the cytoplasm. It catalyses the reaction ATP + H2O + cellular proteinSide 1 = ADP + phosphate + cellular proteinSide 2.. Functionally, part of the Sec protein translocase complex. Interacts with the SecYEG preprotein conducting channel. Has a central role in coupling the hydrolysis of ATP to the transfer of proteins into and across the cell membrane, serving as an ATP-driven molecular motor driving the stepwise translocation of polypeptide chains across the membrane. The sequence is that of Protein translocase subunit SecA 1 from Pediococcus pentosaceus (strain ATCC 25745 / CCUG 21536 / LMG 10740 / 183-1w).